The primary structure comprises 756 residues: MGVPAGMPHPNGLQPQRKDKALAQNPNTPQKGSEAFLKKLIHSSWFFPGAAIVVMLGFLMASFFTQPSRQVDTNVGLQLLNDHQVKSAKIYDGDQRVELQLKDDYKKGNDNYGKSVRFYYVQPRGDEVAKAMESAELESYTDQPVEHSFLGSLVSLLLPILLFGVLFWFLMGRVGGGSSVMSFSKSRAKKFTKDKPEVRFSDVAGVDEALAELEEVREFLAEPEKFTRLGAKIPKGVLLYGPPGTGKTLLAKAVAGEAGVPFYSISGSDFVEMFVGVGASRVRDLFKEAKSDPAAIVFVDEIDAVGRRRGVGMGGGNDEREQTLNQLLVEMDGFDGNSNVIVIAATNRPDVLDPALLRPGRFDRQIGVDAPDMQGREHILRVHAAGKPIANTVDLAQVAKRTPGFTGADLANVMNEAALLTARDNGNVIDDRAIDEAIDRVMAGPQRSSRIMNEHERKVTAYHEGGHALVAAALRNSAPVTKITILPRGRALGYTMVMPQDDKYSTTRHELLDQMAYAMGGRAAEEIVFHDPSTGASNDIQKATDTARKMVTDYGMSAVIGSVKLGGEDTEPFLGGGGASARNYSDATAAKVDAEIRALLEQAHDEAFQILLENRDILDRLAFALLEKETLLENEIAEIFKDVRKRPEREHWYSKPTRERTDIPPVKAPSELAKEAEKSEEAPAEAPTVPVAPAAPAQQVPVAPTQPLPPQAPLTDPDADPTVAMPTQQYPNYPAPPEHRPENGTPNQNGAENERG.

The Cytoplasmic segment spans residues 1 to 44 (MGVPAGMPHPNGLQPQRKDKALAQNPNTPQKGSEAFLKKLIHSS). The helical transmembrane segment at 45-65 (WFFPGAAIVVMLGFLMASFFT) threads the bilayer. Over 66-148 (QPSRQVDTNV…SYTDQPVEHS (83 aa)) the chain is Extracellular. The helical transmembrane segment at 149–169 (FLGSLVSLLLPILLFGVLFWF) threads the bilayer. Residues 170-756 (LMGRVGGGSS…NQNGAENERG (587 aa)) are Cytoplasmic-facing. Residue 241–248 (GPPGTGKT) coordinates ATP. His-463 provides a ligand contact to Zn(2+). Glu-464 is a catalytic residue. 2 residues coordinate Zn(2+): His-467 and Asp-539. 2 stretches are compositionally biased toward basic and acidic residues: residues 647–662 (PERE…ERTD) and 672–681 (LAKEAEKSEE). Residues 647 to 756 (PEREHWYSKP…NQNGAENERG (110 aa)) form a disordered region. Low complexity-rich tracts occupy residues 684 to 703 (AEAP…VPVA) and 713 to 724 (PLTDPDADPTVA). Residues 744–756 (GTPNQNGAENERG) are compositionally biased toward polar residues.

In the central section; belongs to the AAA ATPase family. This sequence in the C-terminal section; belongs to the peptidase M41 family. As to quaternary structure, homohexamer. Zn(2+) is required as a cofactor.

It is found in the cell membrane. Functionally, acts as a processive, ATP-dependent zinc metallopeptidase for both cytoplasmic and membrane proteins. Plays a role in the quality control of integral membrane proteins. The polypeptide is ATP-dependent zinc metalloprotease FtsH (Rothia mucilaginosa (strain DY-18) (Stomatococcus mucilaginosus)).